Reading from the N-terminus, the 716-residue chain is ATP-dependent DNA helicase DinG (716 aa).

An HD1 domain N-terminus region spans residues 1 to 114; that stretch reads MALTAALKAQ…PDLKFTAAFG (114 aa). The Helicase ATP-binding domain maps to 17-294; that stretch reads ALQEQIPDFI…TCMEQFRPKT (278 aa). ATP contacts are provided by Ile26, Gln31, Lys60, and Thr61. The [4Fe-4S] domain stretch occupies residues 115-216; the sequence is RGRYVCPRNL…FFVARREIQE (102 aa). [4Fe-4S] cluster-binding residues include Cys120, Cys194, Cys199, and Cys205. Residues 217-261 form an HD1 domain middle region; sequence AEVVVANHALVMAAMESEAVLPDPKNLLLVLDEGHHLPDVARDAL. The short motif at 248–251 is the DEAH box element; the sequence is DEGH. The interval 262-438 is arch domain; the sequence is EMSAEITAPW…LHLWFHCVGI (177 aa). The tract at residues 439-491 is HD1 domain middle; that stretch reads RVSDQLERLLWRSIPHIIVTSATLRSLNSFSRLQEMSGLKEKAGDRFVALDSP. Residues 492–716 are HD2 domain; the sequence is FNHCEQGKIV…KTKSPRRRRR (225 aa). ATP is bound by residues Asp599, Arg656, and Arg659.

The protein belongs to the helicase family. DinG subfamily. Type 1 sub-subfamily. In terms of assembly, monomer in solution. [4Fe-4S] cluster is required as a cofactor. Mg(2+) serves as cofactor.

The enzyme catalyses Couples ATP hydrolysis with the unwinding of duplex DNA at the replication fork by translocating in the 5'-3' direction. This creates two antiparallel DNA single strands (ssDNA). The leading ssDNA polymer is the template for DNA polymerase III holoenzyme which synthesizes a continuous strand.. It catalyses the reaction ATP + H2O = ADP + phosphate + H(+). Its activity is regulated as follows. ATPase activity is 15-fold stimulated by single-stranded DNA (ssDNA). Reduction of the [4Fe-4S] cluster reversibly switches off helicase activity. Remains fully active after exposure to 100-fold excess of hydrogen peroxide, but the [4Fe-4S] cluster can be efficiently modified by nitric oxide (NO), forming the DinG-bound dinitrosyl iron complex with the concomitant inactivation of helicase activity. Helicase activity on G-quadruplex DNA is inhibited by porphyrin derivatives meso-tetra (N-methyl-4-pyridyl) porphine tetra tosylate (T4) and N-methyl mesoporphyrin IX (NMM). Helicase activity on forked duplexes is not inhibited by T4 or NMM. G-quadruplex ligands such as Pyridostatin, PhenDC3, BRACO-19 and Netropsin can alter recognition and unwinding of G-quadruplex DNAs; the effect is both ligand- and G-quadruplex DNA-specific. Functionally, DNA-dependent ATPase and 5'-3' DNA helicase. Can also unwind DNA:RNA hybrid duplexes. Is active on D-loops, R-loops, and on forked structures. Unwinds G-quadruplex DNA in a 5'-3' direction; unwinding efficiency differs on different substrates. Does not appear to unwind replication forks or Holliday junctions. Translocates on single-stranded (ss)DNA with a 5'-3' polarity. In vitro at high concentrations also unwinds in a 3'-5' direction. May be involved in recombinational DNA repair and the resumption of replication after DNA damage. The [4Fe-4S] cluster is redox active at cellular potentials and is involved in DNA-mediated charge-transport signaling between DNA repair proteins from distinct pathways. DinG cooperates at long-range with endonuclease III, a base excision repair enzyme, using DNA charge transport to redistribute to regions of DNA damage. Binds 10-11 nucleotides of ssDNA in a positively-charged groove across the helicase domains. The polypeptide is ATP-dependent DNA helicase DinG (Escherichia coli (strain K12)).